Reading from the N-terminus, the 393-residue chain is MNDVDATDTFVGQGKFRGAISTSPSHIMQTCGFIQQMFPVEMSPGIESEDDPNYDVNMDIQSFNIFDGVHETEAEASVALCAEARVGINKAGFVILKTFTPGAEGFAFACMDSKTCEHVVIKAGQRQGTATEATVLRALTHPSVVQLKGTFTYNKMTCLILPRYRTDLYCYLAAKRNLPICDILAIQRSVLRALQYLHNNSIIHRDIKSENIFINHPGDVCVGDFGAACFPVDINANRYYGWAGTIATNSPELLARDPYGPAVDIWSAGIVLFEMATGQNSLFERDGLDGNCDSERQIKLIIRRSGTHPNEFPINPTSNLRRQYIGLAKRSSRKPGSRPLWTNLYELPIDLEYLICKMLSFDARHRPSAEVLLNHSVFQTLPDPYPNPMEVGD.

The Protein kinase domain maps to 93-378 (FVILKTFTPG…AEVLLNHSVF (286 aa)). Residues 99-107 (FTPGAEGFA) and Lys122 each bind ATP. Asp206 functions as the Proton acceptor in the catalytic mechanism.

The protein belongs to the protein kinase superfamily. Ser/Thr protein kinase family. Phosphorylated by ORF47; this phosphorylation regulates subsequent phosphorylation of proteins 24 and 27 by ORF66. Autophosphorylated.

It is found in the host cytoplasm. The protein resides in the host nucleus. The catalysed reaction is L-seryl-[protein] + ATP = O-phospho-L-seryl-[protein] + ADP + H(+). It carries out the reaction L-threonyl-[protein] + ATP = O-phospho-L-threonyl-[protein] + ADP + H(+). Its function is as follows. Multifunctional serine/threonine kinase that plays a role in several processes including egress of virus particles from the nucleus, modulation of the actin cytoskeleton and inhibition of apoptosis. Phosphorylates proteins 24 and 27, two critical regulators of capsid budding from nucleus to endoplasmic reticulum, thereby facilitating virion egress. Modulates and redistributes host components of the nuclear envelope, including LMNA, emerin/EMD and the nuclear matrix protein MATR3. Phosphorylates envelope glycoprotein B (gB), probably to direct it to the cell surface. Promotes virus intracellular spread by restructuring host cell cytoskeleton. Blocks host apoptosis to extend cell survival and allow efficient viral replication. Promotes viral gene expression by phosphorylating host HDAC2 to reduce viral genome silencing. Down-regulates class I major histocompatibility complex (MHC-I) surface expression. Additionally, phosphorylates IE62 and targets it to the cytoplasm. The nuclear exclusion of IE62 enables the packaging of abundant levels of IE62 into virions. This Varicella-zoster virus (strain Dumas) (HHV-3) protein is Serine/threonine-protein kinase US3 homolog (66).